Consider the following 407-residue polypeptide: Cell division control protein 12 (407 aa).

Residue Ser-2 is modified to N-acetylserine. The Septin-type G domain maps to 31 to 314 (EGGTFTVMLC…ETYRRLRLEG (284 aa)). The G1 motif stretch occupies residues 41–48 (GESGLGKT). GTP-binding positions include 41–48 (GESGLGKT), Thr-75, Gly-101, 180–188 (KADTLTAQE), Gly-247, and Arg-263. The segment at 98-101 (DTPG) is G3 motif. The tract at residues 179 to 182 (AKAD) is G4 motif. The stretch at 344–406 (EEENALKKYF…KSLQVKKSHL (63 aa)) forms a coiled coil.

Belongs to the TRAFAC class TrmE-Era-EngA-EngB-Septin-like GTPase superfamily. Septin GTPase family. Component of the septin complex which consists of CDC3, CDC10, CDC11, CDC12 and probably SHS1 and rearranges to a cortical collar of highly ordered filaments at the mother-bud-neck. A complex formed by CDC3, CDC10, CDC11 and CDC12 is capable of forming long filaments in vitro and the components seem to be present in a 2:2:2:2 arrangement in vivo. The filaments are proposed to be formed by the end-to-end polymerization of CDC3-CDC12-CDC11 complexes with CDC10 serving as a bridge to bundle the polymers into paired filaments. Component of the GIN4 complex composed of at least BNI5, CDC3, CDC10, CDC11, CDC12, GIN4, NAP1 and SHS1. Self-associates. Interacts with SYP1.

It localises to the membrane. Its subcellular location is the bud neck. Functionally, septins are GTPases involved in cytokinesis that assemble early in the cell cycle as a patch at the incipient bud site and form a ring approximate 15 minutes before bud emergence, which transforms into an hour-glass shaped collar of cortical filaments that spans both sides of the mother-bud neck. This collar persists until just before cytokinesis, when it splits into two rings that occupy opposite sides of the neck. The septins at the bud neck serve as a structural scaffold that recruits different components involved in diverse processes at specific stages during the cell cycle. Many proteins bind asymmetrically to the septin collar. The septin assembly is regulated by protein kinases GIN4 and/or CLA4. May act by recruiting MYO1 and HOF1, a protein involved in septation, to the site of cleavage. Septins are also involved in cell morphogenesis, bud site selection, chitin deposition, cell cycle regulation, cell compartmentalization and spore wall formation. This Saccharomyces cerevisiae (strain ATCC 204508 / S288c) (Baker's yeast) protein is Cell division control protein 12 (CDC12).